Here is a 92-residue protein sequence, read N- to C-terminus: DNA-directed RNA polymerase subunit Rpo11 (92 aa).

Belongs to the archaeal Rpo11/eukaryotic RPB11/RPC19 RNA polymerase subunit family. As to quaternary structure, part of the RNA polymerase complex.

Its subcellular location is the cytoplasm. It carries out the reaction RNA(n) + a ribonucleoside 5'-triphosphate = RNA(n+1) + diphosphate. Functionally, DNA-dependent RNA polymerase (RNAP) catalyzes the transcription of DNA into RNA using the four ribonucleoside triphosphates as substrates. The polypeptide is DNA-directed RNA polymerase subunit Rpo11 (Methanosarcina mazei (strain ATCC BAA-159 / DSM 3647 / Goe1 / Go1 / JCM 11833 / OCM 88) (Methanosarcina frisia)).